Consider the following 643-residue polypeptide: RNA-binding protein MEX3D (643 aa).

Disordered stretches follow at residues 1-48 and 61-92; these read MPGS…DAAA and GLGGARPGDEGMATRSADGATECGEDEPAPPD. The span at 18-34 shows a compositional bias: low complexity; sequence TAGDPGHPHPALAGAED. The span at 83 to 92 shows a compositional bias: acidic residues; that stretch reads CGEDEPAPPD. 2 KH domains span residues 160–221 and 253–314; these read MTEC…KREI and QTTI…REEI. Disordered stretches follow at residues 357–427, 471–505, and 519–583; these read PHPG…GTAT, GAPAQPNTGTRRSSGGGAATTPRHSPTLPEPGGLS, and VGAV…APGP. Residues 405–418 show a composition bias toward gly residues; the sequence is GGSGNGGFTFGGDG. Phosphothreonine is present on T491. S495 carries the post-translational modification Phosphoserine. Low complexity-rich tracts occupy residues 495–505, 531–556, and 567–583; these read SPTLPEPGGLS, LPPFSGSTTFSTTPSLPSTTLASSTL, and PSTTAANSSASTAAPGP. The RING-type zinc finger occupies 592–632; the sequence is CVVCSEGEAMAALVPCGHNLFCMDCAVRICGKSEPECPACR.

The protein localises to the cytoplasm. It is found in the nucleus. Its function is as follows. RNA binding protein, may be involved in post-transcriptional regulatory mechanisms. The chain is RNA-binding protein MEX3D (Mex3d) from Mus musculus (Mouse).